A 211-amino-acid chain; its full sequence is ATP phosphoribosyltransferase (211 aa).

The protein belongs to the ATP phosphoribosyltransferase family. Short subfamily. As to quaternary structure, heteromultimer composed of HisG and HisZ subunits.

The protein resides in the cytoplasm. It catalyses the reaction 1-(5-phospho-beta-D-ribosyl)-ATP + diphosphate = 5-phospho-alpha-D-ribose 1-diphosphate + ATP. Its pathway is amino-acid biosynthesis; L-histidine biosynthesis; L-histidine from 5-phospho-alpha-D-ribose 1-diphosphate: step 1/9. Its function is as follows. Catalyzes the condensation of ATP and 5-phosphoribose 1-diphosphate to form N'-(5'-phosphoribosyl)-ATP (PR-ATP). Has a crucial role in the pathway because the rate of histidine biosynthesis seems to be controlled primarily by regulation of HisG enzymatic activity. The chain is ATP phosphoribosyltransferase from Pseudomonas fluorescens (strain SBW25).